Consider the following 90-residue polypeptide: MGDYFDILTLILTAIYLLIGGGFIIYIYDTYKRTKQEFLIYLSIGFFLLIIGASLPVLTFVAQVLDMSVVVVAILMQIAGLSSIFYSIVR.

The next 3 membrane-spanning stretches (helical) occupy residues 5-27, 40-62, and 67-89; these read FDIL…IIYI, IYLS…TFVA, and MSVV…YSIV.

It localises to the cell membrane. This is an uncharacterized protein from Archaeoglobus fulgidus (strain ATCC 49558 / DSM 4304 / JCM 9628 / NBRC 100126 / VC-16).